Reading from the N-terminus, the 377-residue chain is Chaperone protein DnaJ (377 aa).

Residues 5 to 70 (DCYEVLGISR…QKKAAYDQYG (66 aa)) enclose the J domain. The segment at 133-211 (GISKEIQIPT…CHGHGRYERS (79 aa)) adopts a CR-type zinc-finger fold. C146, C149, C163, C166, C185, C188, C199, and C202 together coordinate Zn(2+). CXXCXGXG motif repeat units follow at residues 146 to 153 (CEQCNGSG), 163 to 170 (CGTCYGQG), 185 to 192 (CPTCRGQG), and 199 to 206 (CHKCHGHG).

Belongs to the DnaJ family. In terms of assembly, homodimer. The cofactor is Zn(2+).

The protein resides in the cytoplasm. Participates actively in the response to hyperosmotic and heat shock by preventing the aggregation of stress-denatured proteins and by disaggregating proteins, also in an autonomous, DnaK-independent fashion. Unfolded proteins bind initially to DnaJ; upon interaction with the DnaJ-bound protein, DnaK hydrolyzes its bound ATP, resulting in the formation of a stable complex. GrpE releases ADP from DnaK; ATP binding to DnaK triggers the release of the substrate protein, thus completing the reaction cycle. Several rounds of ATP-dependent interactions between DnaJ, DnaK and GrpE are required for fully efficient folding. Also involved, together with DnaK and GrpE, in the DNA replication of plasmids through activation of initiation proteins. The protein is Chaperone protein DnaJ of Psychromonas ingrahamii (strain DSM 17664 / CCUG 51855 / 37).